We begin with the raw amino-acid sequence, 503 residues long: TGF-beta receptor type-1 (503 aa).

The first 33 residues, 1-33 (MEAAVAAPRPRLLLLVLAAAAAAAAALLPGATA), serve as a signal peptide directing secretion. The Extracellular segment spans residues 34–126 (LQCFCHLCTK…SSPGLGPVEL (93 aa)). 5 cysteine pairs are disulfide-bonded: Cys36/Cys54, Cys38/Cys41, Cys48/Cys71, Cys86/Cys100, and Cys101/Cys106. The N-linked (GlcNAc...) asparagine glycan is linked to Asn45. Residues 127–147 (AAVIAGPVCFVCISLMLMVYI) traverse the membrane as a helical segment. The Cytoplasmic segment spans residues 148 to 503 (CHNRTVIHHR…QLSQQEGIKM (356 aa)). Phosphoserine is present on Ser165. The region spanning 175–204 (TTLKDLIYDMTTSGSGSGLPLLVQRTIART) is the GS domain. A phosphothreonine; by TGFBR2 mark is found at Thr185 and Thr186. Phosphoserine; by TGFBR2 occurs at positions 187, 189, and 191. Positions 193–194 (LP) match the FKBP1A-binding motif. The 291-residue stretch at 205–495 (IVLQESIGKG…LRIKKTLSQL (291 aa)) folds into the Protein kinase domain. ATP is bound by residues 211-219 (IGKGRFGEV) and Lys232. A Glycyl lysine isopeptide (Lys-Gly) (interchain with G-Cter in ubiquitin) cross-link involves residue Lys268. Asp333 acts as the Proton acceptor in catalysis. Lys391 participates in a covalent cross-link: Glycyl lysine isopeptide (Lys-Gly) (interchain with G-Cter in SUMO).

Belongs to the protein kinase superfamily. TKL Ser/Thr protein kinase family. TGFB receptor subfamily. In terms of assembly, homodimer; in the endoplasmic reticulum but also at the cell membrane. Heterohexamer; TGFB1, TGFB2 and TGFB3 homodimeric ligands assemble a functional receptor composed of two TGFBR1 and TGFBR2 heterodimers to form a ligand-receptor heterohexamer. The respective affinity of TGBRB1 and TGFBR2 for the ligands may modulate the kinetics of assembly of the receptor and may explain the different biological activities of TGFB1, TGFB2 and TGFB3. Component of a complex composed of TSC22D1 (via N-terminus), TGFBR1 and TGFBR2; the interaction between TSC22D1 and TGFBR1 is inhibited by SMAD7 and promoted by TGFB1. Interacts with CD109; inhibits TGF-beta receptor activation in keratinocytes. Interacts with RBPMS. Interacts (unphosphorylated) with FKBP1A; prevents TGFBR1 phosphorylation by TGFBR2 and stabilizes it in the inactive conformation. Interacts with SMAD2, SMAD3 and ZFYVE9; ZFYVE9 recruits SMAD2 and SMAD3 to the TGF-beta receptor. Interacts with TRAF6 and MAP3K7; induces MAP3K7 activation by TRAF6. Interacts with PARD6A; involved in TGF-beta induced epithelial to mesenchymal transition. Interacts with NEDD4L. Interacts with SMAD7, SMURF1 and SMURF2; SMAD7 recruits NEDD4L, SMURF1 and SMURF2 to the TGF-beta receptor. Interacts with USP15 and VPS39. Interacts with SDCBP (via C-terminus). Interacts with CAV1 and this interaction is impaired in the presence of SDCBP. Interacts with APPL1; interaction is TGF beta dependent; mediates trafficking of the TGFBR1 from the endosomes to the nucleus via microtubules in a TRAF6-dependent manner. Interacts with GPR50; this interaction promotes the constitutive activation of SMAD signaling pathway. Requires Mg(2+) as cofactor. Mn(2+) is required as a cofactor. Phosphorylated at basal levels in the absence of ligand. Activated upon phosphorylation by TGFBR2, mainly in the GS domain. Phosphorylation in the GS domain abrogates FKBP1A-binding. In terms of processing, N-Glycosylated. Post-translationally, ubiquitinated; undergoes ubiquitination catalyzed by several E3 ubiquitin ligases including SMURF1, SMURF2 and NEDD4L2. Results in the proteasomal and/or lysosomal degradation of the receptor thereby negatively regulating its activity. Deubiquitinated by USP15, leading to stabilization of the protein and enhanced TGF-beta signal. Its ubiquitination and proteasome-mediated degradation is negatively regulated by SDCBP. Ubiquitinated by BFAR via'Lys-63'-linked ubiquitination at Lys-268, leading to TGF-beta signaling activation. In terms of tissue distribution, found in all tissues examined, most abundant in placenta and least abundant in brain and heart. Expressed in a variety of cancer cell lines.

Its subcellular location is the cell membrane. It localises to the cell junction. The protein localises to the tight junction. It is found in the cell surface. The protein resides in the membrane raft. It carries out the reaction L-threonyl-[receptor-protein] + ATP = O-phospho-L-threonyl-[receptor-protein] + ADP + H(+). The enzyme catalyses L-seryl-[receptor-protein] + ATP = O-phospho-L-seryl-[receptor-protein] + ADP + H(+). With respect to regulation, kept in an inactive conformation by FKBP1A preventing receptor activation in absence of ligand. CD109 is another inhibitor of the receptor. Its function is as follows. Transmembrane serine/threonine kinase forming with the TGF-beta type II serine/threonine kinase receptor, TGFBR2, the non-promiscuous receptor for the TGF-beta cytokines TGFB1, TGFB2 and TGFB3. Transduces the TGFB1, TGFB2 and TGFB3 signal from the cell surface to the cytoplasm and is thus regulating a plethora of physiological and pathological processes including cell cycle arrest in epithelial and hematopoietic cells, control of mesenchymal cell proliferation and differentiation, wound healing, extracellular matrix production, immunosuppression and carcinogenesis. The formation of the receptor complex composed of 2 TGFBR1 and 2 TGFBR2 molecules symmetrically bound to the cytokine dimer results in the phosphorylation and the activation of TGFBR1 by the constitutively active TGFBR2. Activated TGFBR1 phosphorylates SMAD2 which dissociates from the receptor and interacts with SMAD4. The SMAD2-SMAD4 complex is subsequently translocated to the nucleus where it modulates the transcription of the TGF-beta-regulated genes. This constitutes the canonical SMAD-dependent TGF-beta signaling cascade. Also involved in non-canonical, SMAD-independent TGF-beta signaling pathways. For instance, TGFBR1 induces TRAF6 autoubiquitination which in turn results in MAP3K7 ubiquitination and activation to trigger apoptosis. Also regulates epithelial to mesenchymal transition through a SMAD-independent signaling pathway through PARD6A phosphorylation and activation. This Homo sapiens (Human) protein is TGF-beta receptor type-1 (TGFBR1).